A 488-amino-acid chain; its full sequence is Putative sugar transporter ERD6-like 13 (488 aa).

Transmembrane regions (helical) follow at residues 51–71, 89–109, 116–138, 151–171, 182–202, 207–227, 291–311, 324–344, 353–373, 390–410, 423–445, and 451–471; these read LILLFTTFTALCGTFSYGTAA, LAEFSFFGAVLTIGGLVGAAM, VFGRRGALGVSNSFCMAGWLMIA, LFLGVAAGVASYVVPVYIVEI, AINSLVMCASVAVTYLLGSVI, LALISTVPCVFEFVGLFFIPE, VGIGLLVLQQLGGLSGYTFYL, VGVMMASVVQSVTSVLGIVIV, LTVATIMMCLGSLITGLSFLF, GVLVFLTSITIGIGGIPWVMI, GTLCNLTSWSSNWFVSYTFNFLF, and GVFFIYTMISGVGILFVMKMV.

Belongs to the major facilitator superfamily. Sugar transporter (TC 2.A.1.1) family.

The protein localises to the membrane. Its function is as follows. Sugar transporter. The sequence is that of Putative sugar transporter ERD6-like 13 from Arabidopsis thaliana (Mouse-ear cress).